The chain runs to 492 residues: Probable cobyric acid synthase (492 aa).

Residues 252-444 enclose the GATase cobBQ-type domain; that stretch reads PIEVNVVKFS…FHGILENFEF (193 aa). Cys330 acts as the Nucleophile in catalysis. The active site involves His436.

Belongs to the CobB/CobQ family. CobQ subfamily.

Its pathway is cofactor biosynthesis; adenosylcobalamin biosynthesis. Functionally, catalyzes amidations at positions B, D, E, and G on adenosylcobyrinic A,C-diamide. NH(2) groups are provided by glutamine, and one molecule of ATP is hydrogenolyzed for each amidation. The protein is Probable cobyric acid synthase of Methanococcus maripaludis (strain DSM 14266 / JCM 13030 / NBRC 101832 / S2 / LL).